Consider the following 560-residue polypeptide: MPQTRSQAQATISFPKRKLSRALNKAKNSSDAKLEPTNVQTVTCSPRVKALPLSPRKRLGDDNLCNTPHLPPCSPPKQGKKENGPPHSHTLKGRRLVFDNQLTIKSPSKRELAKVHQNKILSSVRKSQEITTNSEQRCPLKKESACVRLFKQEGTCYQQAKLVLNTAVPDRLPAREREMDVIRNFLREHICGKKAGSLYLSGAPGTGKTACLSRILQDLKKELKGFKTIMLNCMSLRTAQAVFPAIAQEICQEEVSRPAGKDMMRKLEKHMTAEKGPMIVLVLDEMDQLDSKGQDVLYTLFEWPWLSNSHLVLIGIANTLDLTDRILPRLQAREKCKPQLLNFPPYTRNQIVTILQDRLNQVSRDQVLDNAAVQFCARKVSAVSGDVRKALDVCRRAIEIVESDVKSQTILKPLSECKSPSEPLIPKRVGLIHISQVISEVDGNRMTLSQEGAQDSFPLQQKILVCSLMLLIRQLKIKEVTLGKLYEAYSKVCRKQQVAAVDQSECLSLSGLLEARGILGLKRNKETRLTKVFFKIEEKEIEHALKDKALIGNILATGLP.

Polar residues-rich tracts occupy residues 1-12 and 35-44; these read MPQTRSQAQATI and EPTNVQTVTC. Residues 1–91 are disordered; the sequence is MPQTRSQAQA…ENGPPHSHTL (91 aa). A phosphoserine mark is found at Ser45 and Ser54. The residue at position 67 (Thr67) is a Phosphothreonine. Ser74 is subject to Phosphoserine. The Cy motif lies at 93-100; it reads GRRLVFDN. 2 positions are modified to phosphoserine: Ser106 and Ser127. 202–209 lines the ATP pocket; sequence GAPGTGKT. Ser419 is modified (phosphoserine).

Belongs to the CDC6/cdc18 family. As to quaternary structure, interacts with PCNA, ORC1, cyclin-CDK. Interacts with HUWE1. Interacts with ANKRD17. Interacts with GRWD1; origin binding of GRWD1 is dependent on CDC6. Interacts with CDT1; are mutually dependent on one another for loading MCM complexes onto chromatin. Interacts with TTC4. Interacts (via Cy motif) with CCNF; the interaction takes place during G2 and M phase. Interacts with CDH1. Ubiquitinated by the SCF(CCNF) E3 ubiquitin-protein ligase complex.

The protein resides in the nucleus. It is found in the cytoplasm. Involved in the initiation of DNA replication. Also participates in checkpoint controls that ensure DNA replication is completed before mitosis is initiated. This is Cell division control protein 6 homolog (CDC6) from Homo sapiens (Human).